Here is a 3258-residue protein sequence, read N- to C-terminus: Protein unc-80 homolog (3258 aa).

Residues 152-173 (VENQGSPGQPCQSSSNDEEENN) are disordered. Over residues 155–166 (QGSPGQPCQSSS) the composition is skewed to low complexity. At serine 257 the chain carries Phosphoserine. 9 disordered regions span residues 291-316 (RGNSFDGSLSSQTSQERGPSHSRASL), 449-468 (RKEDRERKGSIPFHHTGKRR), 522-560 (RRGSSDAATEMESLSARHSHSHHTLVSDLPDPSNSHGEN), 697-717 (KKSENKENETLEKRPSEGAFQ), 732-784 (PAVS…TPVS), 963-1019 (PGKK…EQMQ), 1034-1076 (KSQS…ISLR), 1404-1447 (EDSK…MSNA), and 1817-1836 (AVSAEDEEHTTEHTPNHHVP). Residues 295-307 (FDGSLSSQTSQER) show a composition bias toward polar residues. Serine 525 is modified (phosphoserine). The segment covering 698-712 (KSENKENETLEKRPS) has biased composition (basic and acidic residues). Gly residues predominate over residues 732 to 767 (PAVSGAGDGGGEEGGGGDGGGGGGDGGGGGGGGGGP). Basic and acidic residues-rich tracts occupy residues 769–780 (EKNDKNQEKDES) and 965–974 (KKVEENEQES). Low complexity predominate over residues 1035 to 1052 (SQSAASDTSSQSEQDTSE). A compositionally biased stretch (basic residues) spans 1066-1076 (ARSRSRRISLR). A compositionally biased stretch (basic and acidic residues) spans 1417–1429 (LKSDAGVEEKKEG). 4 helical membrane-spanning segments follow: residues 2268-2288 (PFVLQLFASVAPLLEFPDAAN), 2398-2418 (IAATAALATSLQALLYSVEVL), 2785-2805 (GLAESTSQAAYLALKVILVCF), and 2831-2851 (LALWDFLDFIVRTRIPIFVLL). Residues 2942–2964 (NTGTGTVWEQDSEPSQQASQDTL) are compositionally biased toward polar residues. Positions 2942 to 2982 (NTGTGTVWEQDSEPSQQASQDTLSRTDEEDEENDSISMPSV) are disordered. Residue serine 3042 is modified to Phosphoserine. The interval 3051 to 3213 (NLLVQQPLGR…DDFTGLETSS (163 aa)) is disordered. Positions 3059–3068 (GRKRGLRQLR) are enriched in basic residues. A compositionally biased stretch (polar residues) spans 3088 to 3100 (RLSTTRRSIQPKT). Residues 3117–3129 (PEPAAAPTDALPA) show a composition bias toward low complexity. Residues 3175–3186 (PTEEGEKEEDTE) are compositionally biased toward acidic residues.

The protein belongs to the unc-80 family. NALCN complex consists of NALCN and auxiliary subunits, UNC79, UNC80 and NACL1. These auxiliary subunits are essential for the NALCN complex function. Interacts (via N-terminus half) with NALCN; this interaction facilitates NALCN surface localization. Interacts with UNC79. UNC80 bridges NALCN to UNC79. Post-translationally, phosphorylated on tyrosine residues. In terms of tissue distribution, moderately expressed in fetal brain, spinal cord, skeletal muscle, thymus, spleen, fetal liver, small intestine, colon, kidney and uterus. Highly expressed in adrenal gland, prostate and testis, as well as in brain and cerebellum.

It is found in the cell membrane. Auxiliary subunit of the NALCN sodium channel complex, a voltage-gated ion channel responsible for the resting Na(+) permeability that controls neuronal excitability. Activated by neuropeptides substance P, neurotensin, and extracellular Ca(2+) that regulates neuronal excitability by controlling the sizes of NALCN-dependent sodium-leak current. UNC80 is essential for NALCN sensitivity to extracellular Ca(2+). This Homo sapiens (Human) protein is Protein unc-80 homolog.